A 230-amino-acid polypeptide reads, in one-letter code: Putative transcription factor bHLH107 (230 aa).

The bHLH domain maps to Ala44–Leu93.

In terms of assembly, homodimer.

The protein resides in the nucleus. This is Putative transcription factor bHLH107 (BHLH107) from Arabidopsis thaliana (Mouse-ear cress).